Here is a 571-residue protein sequence, read N- to C-terminus: Proline--tRNA ligase (571 aa).

Belongs to the class-II aminoacyl-tRNA synthetase family. ProS type 1 subfamily. Homodimer.

The protein resides in the cytoplasm. It catalyses the reaction tRNA(Pro) + L-proline + ATP = L-prolyl-tRNA(Pro) + AMP + diphosphate. In terms of biological role, catalyzes the attachment of proline to tRNA(Pro) in a two-step reaction: proline is first activated by ATP to form Pro-AMP and then transferred to the acceptor end of tRNA(Pro). As ProRS can inadvertently accommodate and process non-cognate amino acids such as alanine and cysteine, to avoid such errors it has two additional distinct editing activities against alanine. One activity is designated as 'pretransfer' editing and involves the tRNA(Pro)-independent hydrolysis of activated Ala-AMP. The other activity is designated 'posttransfer' editing and involves deacylation of mischarged Ala-tRNA(Pro). The misacylated Cys-tRNA(Pro) is not edited by ProRS. This Azotobacter vinelandii (strain DJ / ATCC BAA-1303) protein is Proline--tRNA ligase.